Here is a 322-residue protein sequence, read N- to C-terminus: CXXC-type zinc finger protein 5 (322 aa).

Gly residues predominate over residues 1-10 (MSSLGGGSQD). A disordered region spans residues 1 to 100 (MSSLGGGSQD…SGGGSMMGGE (100 aa)). 2 stretches are compositionally biased toward low complexity: residues 11 to 20 (AGGSSSSSTN) and 28 to 52 (SGPKAGAADKSAVVAAAAPASVADD). Threonine 53 is subject to Phosphothreonine. The span at 87 to 97 (SSGGSGGGSMM) shows a compositional bias: gly residues. A CXXC-type zinc finger spans residues 256–297 (GKKKRKRCGMCAPCRRRINCEQCSSCRNRKTGHQICKFRKCE). The short motif at 257 to 262 (KKKRKR) is the Nuclear localization signal element. Cysteine 263, cysteine 266, cysteine 269, cysteine 275, cysteine 278, cysteine 281, cysteine 291, and cysteine 296 together coordinate Zn(2+).

In terms of assembly, interacts with DVL1. Interacts with RBPJ.

Its subcellular location is the nucleus. It localises to the cytoplasm. May indirectly participate in activation of the NF-kappa-B and MAPK pathways. Acts as a mediator of BMP4-mediated modulation of canonical Wnt signaling activity in neural stem cells. Required for DNA damage-induced ATM phosphorylation, p53 activation and cell cycle arrest. Involved in myelopoiesis. Transcription factor. Binds to the oxygen responsive element of COX4I2 and represses its transcription under hypoxia conditions (4% oxygen), as well as normoxia conditions (20% oxygen). May repress COX4I2 transactivation induced by CHCHD2 and RBPJ. Binds preferentially to DNA containing cytidine-phosphate-guanosine (CpG) dinucleotides over CpH (H=A, T, and C), hemimethylated-CpG and hemimethylated-hydroxymethyl-CpG. The sequence is that of CXXC-type zinc finger protein 5 (CXXC5) from Homo sapiens (Human).